Reading from the N-terminus, the 72-residue chain is Translation initiation factor IF-1 (72 aa).

Residues 1-72 (MAKEDNIEMQ…SKGRIVFRSR (72 aa)) enclose the S1-like domain.

It belongs to the IF-1 family. Component of the 30S ribosomal translation pre-initiation complex which assembles on the 30S ribosome in the order IF-2 and IF-3, IF-1 and N-formylmethionyl-tRNA(fMet); mRNA recruitment can occur at any time during PIC assembly.

It localises to the cytoplasm. Its function is as follows. One of the essential components for the initiation of protein synthesis. Stabilizes the binding of IF-2 and IF-3 on the 30S subunit to which N-formylmethionyl-tRNA(fMet) subsequently binds. Helps modulate mRNA selection, yielding the 30S pre-initiation complex (PIC). Upon addition of the 50S ribosomal subunit IF-1, IF-2 and IF-3 are released leaving the mature 70S translation initiation complex. This Sodalis glossinidius (strain morsitans) protein is Translation initiation factor IF-1.